Consider the following 526-residue polypeptide: Probable DNA ligase (526 aa).

ATP is bound at residue Glu228. Lys230 (N6-AMP-lysine intermediate) is an active-site residue. The ATP site is built by Arg235, Arg250, Glu279, Phe319, Arg391, and Lys397.

The protein belongs to the ATP-dependent DNA ligase family. It depends on Mg(2+) as a cofactor.

It catalyses the reaction ATP + (deoxyribonucleotide)n-3'-hydroxyl + 5'-phospho-(deoxyribonucleotide)m = (deoxyribonucleotide)n+m + AMP + diphosphate.. Functionally, DNA ligase that seals nicks in double-stranded DNA during DNA replication, DNA recombination and DNA repair. This is Probable DNA ligase from Mycobacterium avium (strain 104).